The chain runs to 1161 residues: Immunoglobulin superfamily member 3 (1161 aa).

Residues 1–16 (MGTAALLILLAGVSWA) form the signal peptide. The Extracellular segment spans residues 17–1091 (QREVAIQPGP…LQSTICANDA (1075 aa)). 8 consecutive Ig-like C2-type domains span residues 18–135 (REVA…AKVN), 140–258 (PDTL…WFPL), 272–382 (PTDK…RGPS), 402–523 (PLRT…WQLL), 541–651 (FAVT…RETS), 674–796 (PRLQ…EETS), 806–930 (PDAN…WYRR), and 947–1063 (PQLQ…WYLL). Cystine bridges form between C39-C117 and C164-C242. The EWI motif signature appears at 246–248 (EWI). Cystine bridges form between C298–C372, C428–C507, C562–C641, C697–C775, C831–C914, and C970–C1047. Residues 1092–1112 (LFYLVFFYPFPIFGILIITIL) traverse the membrane as a helical segment. Residues 1113–1161 (LVRFRHRPTGKPGEGKNGVPLLWIKEPHLNYSPTCLEPPVLSIHPGTID) lie on the Cytoplasmic side of the membrane.

The protein resides in the membrane. The chain is Immunoglobulin superfamily member 3 (igsf3) from Xenopus tropicalis (Western clawed frog).